A 487-amino-acid chain; its full sequence is Melanopsin (487 aa).

The tract at residues 1–37 (MNPPSGPRTQEPSCVATPASPSRWDGYRSSTSSLDQP) is disordered. Over 1–67 (MNPPSGPRTQ…VDVPDHAHYT (67 aa)) the chain is Extracellular. A helical transmembrane segment spans residues 68-88 (LGTVILLVGLTGILGNLMVIY). Over 89–102 (TFCRSRGLRTPANM) the chain is Cytoplasmic. A helical transmembrane segment spans residues 103–123 (FIINLAVSDFFMSFTQAPVFF). At 124–139 (ASSLHKRWLFGEAGCE) the chain is on the extracellular side. A disulfide bond links Cys138 and Cys216. A helical transmembrane segment spans residues 140–160 (FYAFCGALFGITSMITLMAIA). Residues 161 to 183 (LDRYLVITHPLATIGVVSKRRAA) lie on the Cytoplasmic side of the membrane. Residues 184–204 (LVLLGVWLYALAWSLPPFFGW) form a helical membrane-spanning segment. Topologically, residues 205 to 233 (SAYVPEGLLTSCSWDYMSFTPSVRAYTML) are extracellular. A helical membrane pass occupies residues 234–254 (LFCFVFFLPLLVIVYCYIFIF). Residues 255 to 291 (RAIRETGQALQTFRACEGGGRSPRQRQRLQREWKMAK) lie on the Cytoplasmic side of the membrane. A helical membrane pass occupies residues 292 to 312 (IELLVILLFVLSWAPYSIVAL). Residues 313-327 (MAFAGYAHVLTPYMN) lie on the Extracellular side of the membrane. Residues 328–348 (SVPAVIAKASAIHNPIIYAIT) traverse the membrane as a helical segment. N6-(retinylidene)lysine is present on Lys335. At 349-487 (HPKYRMAIAQ…LPLHPGWAFH (139 aa)) the chain is on the cytoplasmic side. A disordered region spans residues 436-459 (CSQGLEDREAKAPVRPQGREAETP). Basic and acidic residues predominate over residues 440–457 (LEDREAKAPVRPQGREAE).

It belongs to the G-protein coupled receptor 1 family. Opsin subfamily. As to expression, eye. Expression is restricted within the ganglion cell layer.

Its subcellular location is the cell membrane. The protein localises to the cell projection. It localises to the axon. It is found in the dendrite. The protein resides in the perikaryon. Functionally, photoreceptor that binds cis-retinaldehydes. Contributes to pupillar reflex, photoentrainment and other non-image forming responses to light. May be involved in the optokinetic visual tracking response. May be involved in the regulation of retinal hyaloid vessel growth and regression. This Felis catus (Cat) protein is Melanopsin (OPN4).